Here is a 155-residue protein sequence, read N- to C-terminus: 2-C-methyl-D-erythritol 2,4-cyclodiphosphate synthase (155 aa).

2 residues coordinate a divalent metal cation: aspartate 8 and histidine 10. Residues 8 to 10 (DVH) and 34 to 35 (HS) contribute to the 4-CDP-2-C-methyl-D-erythritol 2-phosphate site. Histidine 42 contributes to the a divalent metal cation binding site. Residues 56-58 (DIG), 61-65 (FPDSD), 100-106 (AQKPKML), 132-135 (TTEE), phenylalanine 139, and lysine 142 each bind 4-CDP-2-C-methyl-D-erythritol 2-phosphate.

It belongs to the IspF family. As to quaternary structure, homotrimer. It depends on a divalent metal cation as a cofactor.

The enzyme catalyses 4-CDP-2-C-methyl-D-erythritol 2-phosphate = 2-C-methyl-D-erythritol 2,4-cyclic diphosphate + CMP. It participates in isoprenoid biosynthesis; isopentenyl diphosphate biosynthesis via DXP pathway; isopentenyl diphosphate from 1-deoxy-D-xylulose 5-phosphate: step 4/6. In terms of biological role, involved in the biosynthesis of isopentenyl diphosphate (IPP) and dimethylallyl diphosphate (DMAPP), two major building blocks of isoprenoid compounds. Catalyzes the conversion of 4-diphosphocytidyl-2-C-methyl-D-erythritol 2-phosphate (CDP-ME2P) to 2-C-methyl-D-erythritol 2,4-cyclodiphosphate (ME-CPP) with a corresponding release of cytidine 5-monophosphate (CMP). The sequence is that of 2-C-methyl-D-erythritol 2,4-cyclodiphosphate synthase from Clostridium botulinum (strain ATCC 19397 / Type A).